An 843-amino-acid polypeptide reads, in one-letter code: Taste receptor type 1 member 2 (843 aa).

The N-terminal stretch at 1-19 is a signal peptide; sequence MGPQARTLHLLFLLLHALP. The Extracellular segment spans residues 20–570; the sequence is KPVMLVGNSD…AFLEWHEVPT (551 aa). Residues N87, N296, N316, N355, N372, N432, N484, N491, and N531 are each glycosylated (N-linked (GlcNAc...) asparagine). A helical membrane pass occupies residues 571 to 591; the sequence is IVVTILAALGFISTLAILLIF. Residues 592 to 606 are Cytoplasmic-facing; the sequence is WRHFQTPMVRSAGGP. A helical membrane pass occupies residues 607–627; that stretch reads MCFLMLVPLLLAFGMVPVYVG. Topologically, residues 628-642 are extracellular; that stretch reads PPTVFSCFCRQAFFT. The helical transmembrane segment at 643–663 threads the bilayer; the sequence is VCFSVCLSCITVRSFQIVCVF. The Cytoplasmic segment spans residues 664-682; sequence KMARRLPSAYGFWMRYHGP. A helical membrane pass occupies residues 683–703; it reads YVFVAFITAVKVALVAGNMLA. Topologically, residues 704–731 are extracellular; the sequence is TTINPIGRTDPDDPNIIILSCHPNYRNG. A helical membrane pass occupies residues 732–752; it reads LLFNTSMDLLLSVLGFSFAYV. Residues 753–764 are Cytoplasmic-facing; sequence GKELPTNYNEAK. The chain crosses the membrane as a helical span at residues 765-785; the sequence is FITLSMTFSFTSSISLCTFMS. Residues 786 to 789 lie on the Extracellular side of the membrane; sequence VHDG. A helical transmembrane segment spans residues 790–810; sequence VLVTIMDLLVTVLNFLAIGLG. Topologically, residues 811 to 843 are cytoplasmic; it reads YFGPKCYMILFYPERNTSAYFNSMIQGYTMRKS.

Belongs to the G-protein coupled receptor 3 family. TAS1R subfamily. In terms of assembly, forms heterodimers with TAS1R3. Expressed mainly in circumvallate and foliate taste papillae.

It is found in the cell membrane. Functionally, putative taste receptor. TAS1R2/TAS1R3 recognizes diverse natural and synthetic sweeteners. The protein is Taste receptor type 1 member 2 (Tas1r2) of Mus musculus (Mouse).